A 104-amino-acid polypeptide reads, in one-letter code: Protein RnfH (104 aa).

Belongs to the UPF0125 (RnfH) family.

The chain is Protein RnfH from Pseudomonas fluorescens (strain ATCC BAA-477 / NRRL B-23932 / Pf-5).